Reading from the N-terminus, the 104-residue chain is Ribonuclease P protein component 4 (104 aa).

Positions 57, 60, 83, and 86 each coordinate Zn(2+).

Belongs to the eukaryotic/archaeal RNase P protein component 4 family. In terms of assembly, consists of a catalytic RNA component and at least 4-5 protein subunits. Zn(2+) is required as a cofactor.

The protein resides in the cytoplasm. It catalyses the reaction Endonucleolytic cleavage of RNA, removing 5'-extranucleotides from tRNA precursor.. Part of ribonuclease P, a protein complex that generates mature tRNA molecules by cleaving their 5'-ends. The sequence is that of Ribonuclease P protein component 4 from Saccharolobus islandicus (strain L.S.2.15 / Lassen #1) (Sulfolobus islandicus).